The sequence spans 492 residues: Probable malate:quinone oxidoreductase 1 (492 aa).

It belongs to the MQO family. FAD serves as cofactor.

The catalysed reaction is (S)-malate + a quinone = a quinol + oxaloacetate. The protein operates within carbohydrate metabolism; tricarboxylic acid cycle; oxaloacetate from (S)-malate (quinone route): step 1/1. The chain is Probable malate:quinone oxidoreductase 1 from Staphylococcus aureus (strain MW2).